The primary structure comprises 558 residues: Factor VII-activating protease (558 aa).

Positions 1-23 (MFVRMLVFRVLLLIALVGKSVIG) are cleaved as a signal peptide. EGF-like domains follow at residues 71-107 (DDDP…SRCQ), 109-146 (AQNK…PDCS), and 148-186 (VLPA…KFCE). 18 disulfides stabilise this stretch: Cys-75–Cys-86, Cys-80–Cys-95, Cys-97–Cys-106, Cys-113–Cys-123, Cys-118–Cys-134, Cys-136–Cys-145, Cys-152–Cys-163, Cys-157–Cys-174, Cys-176–Cys-185, Cys-192–Cys-274, Cys-213–Cys-255, Cys-244–Cys-269, Cys-299–Cys-433, Cys-345–Cys-361, Cys-353–Cys-422, Cys-445–Cys-513, Cys-475–Cys-491, and Cys-503–Cys-531. One can recognise a Kringle domain in the interval 191-274 (DCYVGDGYSY…KWEYCDVTVC (84 aa)). The region spanning 312-553 (IYGGFKSTAG…FLNWIKTTMH (242 aa)) is the Peptidase S1 domain. Catalysis depends on charge relay system residues His-360 and Asp-409. Ser-507 functions as the Charge relay system in the catalytic mechanism.

This sequence belongs to the peptidase S1 family. In terms of assembly, heterodimer; disulfide-linked. Heterodimer of a 50 kDa heavy and a 27 kDa light chain linked by a disulfide bond. Proteolytic cleavage at Gly-23 or Met-27 can give rise to the 50 kDa heavy chain (HC) and cleavage at Arg-311 or Lys-317 can give rise to the 27 kDa light chain (LC). The HC can undergo further proteolytic cleavage giving rise to a 26 kDa fragment. The LC can undergo further proteolytic cleavage at Arg-311 leading to a 17-kDa fragment and at Arg-478 leading to a 8-kDa fragment. As to expression, liver and kidney.

It localises to the secreted. In terms of biological role, cleaves the alpha-chain at multiple sites and the beta-chain between 'Lys-53' and 'Lys-54' but not the gamma-chain of fibrinogen and therefore does not initiate the formation of the fibrin clot and does not cause the fibrinolysis directly. It does not cleave (activate) prothrombin and plasminogen but converts the inactive single chain urinary plasminogen activator (pro-urokinase) to the active two chain form. Activates coagulation factor VII. May function as a tumor suppressor negatively regulating cell proliferation and cell migration. The sequence is that of Factor VII-activating protease from Mus musculus (Mouse).